Consider the following 577-residue polypeptide: Protein hinderin (577 aa).

The residue at position 21 (Ser21) is a Phosphoserine. A coiled-coil region spans residues 91–167; that stretch reads LKDLCLEDKR…CQELLSLYQK (77 aa). At Ser179 the chain carries Phosphoserine. Residues 251-282 form a disordered region; sequence TLHHPKDDLDKIPSETTTCNCESPGRKPAVPT. The span at 254-263 shows a compositional bias: basic and acidic residues; that stretch reads HPKDDLDKIP. A coiled-coil region spans residues 358-402; the sequence is LKKQISEDRKQQLMLQKMELEIEKERLQHLLAQQETKLLLKQQQL. Disordered stretches follow at residues 425-444, 449-492, and 520-540; these read SSSIKKHQDPPNSGENRKER, FHSH…GSLK, and LSPNSAPKPQRYPSREAGAWN. Residues 449-468 show a composition bias toward basic and acidic residues; that stretch reads FHSHMKDDAQWSCQKKDTCR. Ser490 and Ser521 each carry phosphoserine.

Interacts (via N- and C-terminal domains) with SMC3 (via central hinge region). Widely expressed.

Competes with SMC1 for binding to SMC3. May affect the availability of SMC3 to engage in the formation of multimeric protein complexes. This chain is Protein hinderin (KIAA1328), found in Homo sapiens (Human).